The chain runs to 146 residues: MGPCNPTNIFLLCKDYEVDFEDLRLTCVFCKNELTTEELLAFALKELSIVWRHNWPFGVCAPCLAREVKVRELRHWDHSCYGPTVEQTTGRSLAELYIRCHACSKPLSIQEKEHQVQAYIHFHYIAGQWTGRCCQCRGPCTARWQP.

2 zinc fingers span residues 27-63 and 100-136; these read CVFC…CAPC and CHAC…CCQC.

This sequence belongs to the papillomaviridae E6 protein family. As to quaternary structure, forms homodimers. Interacts with ubiquitin-protein ligase UBE3A/E6-AP; this interaction stimulates UBE3A ubiquitin activity. Interacts with host TP53 and EP300; this interaction inhibits TP53 activity.

It is found in the host cytoplasm. The protein resides in the host nucleus. Plays a major role in the induction and maintenance of cellular transformation. E6 associates with host UBE3A/E6-AP ubiquitin-protein ligase and modulates its activity. Sequesters tumor suppressor TP53 in the host cytoplasm and modulates its activity by interacting with host EP300 that results in the reduction of TP53 acetylation and activation. In turn, apoptosis induced by DNA damage is inhibited. E6 also protects host keratinocytes from apoptosis by mediating the degradation of host BAK1. May also inhibit host immune response. The chain is Protein E6 from Human papillomavirus type 61.